Reading from the N-terminus, the 291-residue chain is MSTEQTTKTPRVVIITGISGAGRRTAAHAVEDLGWYVVDNLPPAMLGALVDEIAANNIDRLAVVLDVRSRIMFDALGVAVNALDERGIDPAIVFLEASDETIVRRQESSRRPLPLQQGGHLLDAVALERRMLSDLRAEADLVIDTTSITARQLAQRIDHAFAEGIDEGLAFQVMSFGFKRGVPIDADLVFDVRFLPNPYWVPELRPKTGLSSDVASYVMAQAGATEFIDRVEQLLGGMAPGYLREGKKQVTVAVGCTGGKHRSTAISEELSTRLAARGHRTAVLHRDLGKE.

Residue 17 to 24 (GISGAGRR) participates in ATP binding. 66 to 69 (DVRS) is a GTP binding site.

Belongs to the RapZ-like family.

Functionally, displays ATPase and GTPase activities. The chain is Nucleotide-binding protein PPA0813 from Cutibacterium acnes (strain DSM 16379 / KPA171202) (Propionibacterium acnes).